The sequence spans 96 residues: Growth-regulated alpha protein (96 aa).

A signal peptide spans 1–24 (MIPATRSLLCAALLLLATSRLATG). 2 cysteine pairs are disulfide-bonded: cysteine 33-cysteine 59 and cysteine 35-cysteine 75.

Belongs to the intercrine alpha (chemokine CxC) family. The N-terminal processed form KC(5-72) is produced by proteolytic cleavage after secretion from bone marrow stromal cells.

The protein resides in the secreted. Functionally, has chemotactic activity for neutrophils. Contributes to neutrophil activation during inflammation. Hematoregulatory chemokine, which, in vitro, suppresses hematopoietic progenitor cell proliferation. KC(5-72) shows a highly enhanced hematopoietic activity. In Mus musculus (Mouse), this protein is Growth-regulated alpha protein (Cxcl1).